An 88-amino-acid chain; its full sequence is MSSFDQTMQFHFSEEPAETNVREVLLTVYGALQEKGYNPINQIVGYLLSGDPAYIPRHKDARALIRKIERDELIEELVKFYLQGQRKD.

Belongs to the UPF0297 family.

This is UPF0297 protein GK2555 from Geobacillus kaustophilus (strain HTA426).